We begin with the raw amino-acid sequence, 673 residues long: Vasorin (673 aa).

A signal peptide spans 1-24; that stretch reads MHSRSCLPPLLLLLLVLLGSGVQG. The 29-residue stretch at 25-53 folds into the LRRNT domain; the sequence is CPSGCQCNQPQTVFCTARQGTTVPRDVPP. The Extracellular segment spans residues 25-576; it reads CPSGCQCNQP…VTQAREGNLP (552 aa). LRR repeat units follow at residues 54–75, 78–99, 102–123, 126–147, 150–170, 171–192, 194–215, 218–239, 241–265, and 266–288; these read DTVG…CFAG, GLQL…IFQP, NLSN…TFRG, RLER…AFDA, RLLE…LHLP, RLLL…ILDT, NVEA…LFGR, NLHD…IQGL, GLTR…AGLT, and ALQE…SSLF. N102 and N118 each carry an N-linked (GlcNAc...) asparagine glycan. A glycan (N-linked (GlcNAc...) asparagine) is linked at N274. The region spanning 299-352 is the LRRCT domain; that stretch reads NPFNCLCPLSWFGPWVRENHVVLASPEETRCHFPPKNAGRLLLDLDYADFGCPV. Residues 369–389 are disordered; the sequence is PTLSTSSQAPTWPSLTEPTTQ. The span at 370-389 shows a compositional bias: polar residues; the sequence is TLSTSSQAPTWPSLTEPTTQ. The region spanning 406-443 is the EGF-like domain; it reads QPQDCPASICLNGGSCRLGARHHWECLCPEGFIGLYCE. 3 cysteine pairs are disulfide-bonded: C410-C421, C415-C431, and C433-C442. The Fibronectin type-III domain occupies 463-559; the sequence is PLLPLSIEPV…ACGEANTSQA (97 aa). N-linked (GlcNAc...) asparagine glycans are attached at residues N501, N529, and N555. A helical membrane pass occupies residues 577–597; sequence LLIAPALAAVLLAVLAAAGAA. Residues 598–673 lie on the Cytoplasmic side of the membrane; that stretch reads YCVRRARATS…QGVLPAKHYI (76 aa). Positions 608–648 are disordered; it reads TAQDKGQVGPGTGPLELEGVKAPLEPGSKATEGGGEALSGG.

As to quaternary structure, interacts with TGFB1, TGFB2 and TGFB3. Post-translationally, N-glycosylated.

Its subcellular location is the membrane. Functionally, may act as an inhibitor of TGF-beta signaling. The sequence is that of Vasorin (Vasn) from Mus musculus (Mouse).